Consider the following 176-residue polypeptide: Isopentenyl-diphosphate Delta-isomerase (176 aa).

Mn(2+)-binding residues include His24 and His30. The 133-residue stretch at 28–160 folds into the Nudix hydrolase domain; sequence LLHRAFSIFV…PSAFTVWFHC (133 aa). Cys65 is a catalytic residue. His67 contacts Mn(2+). Position 85 (Glu85) interacts with Mg(2+). Mn(2+)-binding residues include Glu110 and Glu112. The active site involves Glu112.

Belongs to the IPP isomerase type 1 family. Mg(2+) is required as a cofactor. The cofactor is Mn(2+).

Its subcellular location is the cytoplasm. It carries out the reaction isopentenyl diphosphate = dimethylallyl diphosphate. Its pathway is isoprenoid biosynthesis; dimethylallyl diphosphate biosynthesis; dimethylallyl diphosphate from isopentenyl diphosphate: step 1/1. Functionally, catalyzes the 1,3-allylic rearrangement of the homoallylic substrate isopentenyl (IPP) to its highly electrophilic allylic isomer, dimethylallyl diphosphate (DMAPP). The chain is Isopentenyl-diphosphate Delta-isomerase from Burkholderia multivorans (strain ATCC 17616 / 249).